Here is a 412-residue protein sequence, read N- to C-terminus: Putative competence-damage inducible protein (412 aa).

The protein belongs to the CinA family.

This chain is Putative competence-damage inducible protein, found in Bacillus cereus (strain AH187).